The chain runs to 428 residues: Adenylosuccinate synthetase (428 aa).

GTP contacts are provided by residues 12 to 18 (GDEGKGK) and 40 to 42 (GHT). Residue D13 is the Proton acceptor of the active site. Mg(2+) contacts are provided by D13 and G40. IMP-binding positions include 13-16 (DEGK), 38-41 (NAGH), T130, R144, Q225, T240, and R304. The active-site Proton donor is H41. 300-306 (VTTGRAR) contributes to the substrate binding site. GTP-binding positions include R306, 332–334 (KID), and 414–416 (SVG).

It belongs to the adenylosuccinate synthetase family. As to quaternary structure, homodimer. It depends on Mg(2+) as a cofactor.

It is found in the cytoplasm. The catalysed reaction is IMP + L-aspartate + GTP = N(6)-(1,2-dicarboxyethyl)-AMP + GDP + phosphate + 2 H(+). It functions in the pathway purine metabolism; AMP biosynthesis via de novo pathway; AMP from IMP: step 1/2. In terms of biological role, plays an important role in the de novo pathway of purine nucleotide biosynthesis. Catalyzes the first committed step in the biosynthesis of AMP from IMP. This chain is Adenylosuccinate synthetase, found in Clostridium kluyveri (strain ATCC 8527 / DSM 555 / NBRC 12016 / NCIMB 10680 / K1).